A 439-amino-acid chain; its full sequence is Mitochondrial distribution and morphology protein 12 (439 aa).

Residues 1-439 (MSIDVNWRFA…VYPSFWTFLI (439 aa)) enclose the SMP-LTD domain. 3 disordered regions span residues 70 to 103 (YEED…LNEP), 185 to 274 (GWSD…PPRM), and 354 to 386 (PEQQ…RHGG). The segment covering 78 to 91 (TSDASEERGEEHSS) has biased composition (basic and acidic residues). A compositionally biased stretch (polar residues) spans 215-245 (DTSNSTSRPSTANTLPSHPSGSSKNSGQAAT). Basic and acidic residues-rich tracts occupy residues 247-261 (RNDH…HLED) and 362-371 (SAGDDHRPQS).

The protein belongs to the MDM12 family. Component of the ER-mitochondria encounter structure (ERMES) or MDM complex, composed of mmm1, mdm10, mdm12 and mdm34. A mmm1 homodimer associates with one molecule of mdm12 on each side in a pairwise head-to-tail manner, and the SMP-LTD domains of mmm1 and mdm12 generate a continuous hydrophobic tunnel for phospholipid trafficking.

It is found in the mitochondrion outer membrane. The protein resides in the endoplasmic reticulum membrane. In terms of biological role, component of the ERMES/MDM complex, which serves as a molecular tether to connect the endoplasmic reticulum (ER) and mitochondria. Components of this complex are involved in the control of mitochondrial shape and protein biogenesis, and function in nonvesicular lipid trafficking between the ER and mitochondria. Mdm12 is required for the interaction of the ER-resident membrane protein mmm1 and the outer mitochondrial membrane-resident beta-barrel protein mdm10. The mdm12-mmm1 subcomplex functions in the major beta-barrel assembly pathway that is responsible for biogenesis of all mitochondrial outer membrane beta-barrel proteins, and acts in a late step after the SAM complex. The mdm10-mdm12-mmm1 subcomplex further acts in the TOM40-specific pathway after the action of the mdm12-mmm1 complex. Essential for establishing and maintaining the structure of mitochondria and maintenance of mtDNA nucleoids. The sequence is that of Mitochondrial distribution and morphology protein 12 from Aspergillus fumigatus (strain CBS 144.89 / FGSC A1163 / CEA10) (Neosartorya fumigata).